Consider the following 435-residue polypeptide: Serine--tRNA ligase (435 aa).

242-244 (TAE) serves as a coordination point for L-serine. 273–275 (RSE) serves as a coordination point for ATP. L-serine is bound at residue Glu-296. 360–363 (EISS) contacts ATP. Position 396 (Ser-396) interacts with L-serine.

It belongs to the class-II aminoacyl-tRNA synthetase family. Type-1 seryl-tRNA synthetase subfamily. As to quaternary structure, homodimer. The tRNA molecule binds across the dimer.

The protein resides in the cytoplasm. It catalyses the reaction tRNA(Ser) + L-serine + ATP = L-seryl-tRNA(Ser) + AMP + diphosphate + H(+). The catalysed reaction is tRNA(Sec) + L-serine + ATP = L-seryl-tRNA(Sec) + AMP + diphosphate + H(+). It participates in aminoacyl-tRNA biosynthesis; selenocysteinyl-tRNA(Sec) biosynthesis; L-seryl-tRNA(Sec) from L-serine and tRNA(Sec): step 1/1. In terms of biological role, catalyzes the attachment of serine to tRNA(Ser). Is also able to aminoacylate tRNA(Sec) with serine, to form the misacylated tRNA L-seryl-tRNA(Sec), which will be further converted into selenocysteinyl-tRNA(Sec). The chain is Serine--tRNA ligase from Vibrio vulnificus (strain YJ016).